A 597-amino-acid chain; its full sequence is Pentatricopeptide repeat-containing protein At2g21090 (597 aa).

13 PPR repeats span residues 45 to 79 (PFDL…GFKR), 81 to 111 (NTLL…MHLR), 112 to 142 (NLYS…MPER), 143 to 177 (DVVS…GIKF), 178 to 212 (NEFS…GFLS), 213 to 243 (NVVL…MTVK), 244 to 274 (DIHI…MPEK), 275 to 309 (NPVS…GVKP), 310 to 344 (EQFT…NVRP), 345 to 375 (NAIV…CDDK), 377 to 411 (DCVF…RVQP), 412 to 447 (NRTT…GIVP), and 448 to 478 (DQEH…MPFE). The tract at residues 483–558 (IWNAILGVCR…EKAVSWIEIE (76 aa)) is type E motif. Residues 559–591 (KKVEAFTVSDGSHAHARKEEIYFILHNLAAVIE) are type E(+) motif.

Belongs to the PPR family. PCMP-E subfamily.

The polypeptide is Pentatricopeptide repeat-containing protein At2g21090 (PCMP-E48) (Arabidopsis thaliana (Mouse-ear cress)).